The primary structure comprises 487 residues: Glutamyl-tRNA(Gln) amidotransferase subunit A (487 aa).

Residues Lys-78 and Ser-153 each act as charge relay system in the active site. Ser-177 serves as the catalytic Acyl-ester intermediate.

Belongs to the amidase family. GatA subfamily. In terms of assembly, heterotrimer of A, B and C subunits.

It carries out the reaction L-glutamyl-tRNA(Gln) + L-glutamine + ATP + H2O = L-glutaminyl-tRNA(Gln) + L-glutamate + ADP + phosphate + H(+). Allows the formation of correctly charged Gln-tRNA(Gln) through the transamidation of misacylated Glu-tRNA(Gln) in organisms which lack glutaminyl-tRNA synthetase. The reaction takes place in the presence of glutamine and ATP through an activated gamma-phospho-Glu-tRNA(Gln). The sequence is that of Glutamyl-tRNA(Gln) amidotransferase subunit A from Oleidesulfovibrio alaskensis (strain ATCC BAA-1058 / DSM 17464 / G20) (Desulfovibrio alaskensis).